A 249-amino-acid chain; its full sequence is NAD(P)H-quinone oxidoreductase subunit K (249 aa).

[4Fe-4S] cluster contacts are provided by Cys-65, Cys-66, Cys-130, and Cys-161.

This sequence belongs to the complex I 20 kDa subunit family. As to quaternary structure, NDH-1 can be composed of about 15 different subunits; different subcomplexes with different compositions have been identified which probably have different functions. [4Fe-4S] cluster serves as cofactor.

The protein localises to the cellular thylakoid membrane. It carries out the reaction a plastoquinone + NADH + (n+1) H(+)(in) = a plastoquinol + NAD(+) + n H(+)(out). It catalyses the reaction a plastoquinone + NADPH + (n+1) H(+)(in) = a plastoquinol + NADP(+) + n H(+)(out). In terms of biological role, NDH-1 shuttles electrons from an unknown electron donor, via FMN and iron-sulfur (Fe-S) centers, to quinones in the respiratory and/or the photosynthetic chain. The immediate electron acceptor for the enzyme in this species is believed to be plastoquinone. Couples the redox reaction to proton translocation, and thus conserves the redox energy in a proton gradient. Cyanobacterial NDH-1 also plays a role in inorganic carbon-concentration. The polypeptide is NAD(P)H-quinone oxidoreductase subunit K (Prochlorococcus marinus (strain NATL2A)).